The sequence spans 1035 residues: Cell-division control histidine kinase PdhS (1035 aa).

Positions 1-613 are important for polar localization; that stretch reads MSGSYPFIDI…HADGSEEPVD (613 aa). The disordered stretch occupies residues 500 to 533; that stretch reads QGLANTRAESETPVSETSSIEPVEPTPPVKTRSE. The interaction with DivK stretch occupies residues 614–1035; sequence AHLNAIAWRG…VFPPTRVLAD (422 aa). Positions 659–730 constitute a PAS domain; it reads HVEELKTILD…YLHGLSGNGV (72 aa). Residues 802 to 1031 form the Histidine kinase domain; sequence RISHEIRTPL…VVEIVFPPTR (230 aa). A Phosphohistidine; by autocatalysis modification is found at His805.

Interacts with DivK.

The protein resides in the cytoplasm. The catalysed reaction is ATP + protein L-histidine = ADP + protein N-phospho-L-histidine.. Its function is as follows. Functions as a polar differentiation marker. Essential protein that, by localizing in the old pole of dividing cells, controls cell division and maturation, probably through control of DivK phosphorylation status and cellular distribution, which in turn regulates CtrA, a transcriptional regulator of the minB operon. The asymmetrical localization of this protein is probably required for cells to enter a new division cycle. This Brucella ovis (strain ATCC 25840 / 63/290 / NCTC 10512) protein is Cell-division control histidine kinase PdhS (pdhS).